Reading from the N-terminus, the 259-residue chain is MAIHLVIIDALNLIRRVHSAQPDPTDIANTIQNTRRTLQRIISESHPTHIVAVFDHLGSDRGWRAEILPEYKQGRKPMPEPLLNGLEKIQEAWWQLGIDSLLSEGDEADDLVATLACKVAQHGEKVTIISTDKGYCQLLSPTLQIRDYFQHRWLDQPFIEQEFGVKPQQLSDYWGLTGISSSQVTGIPGIGPKAAKEILSQFDDIEQAFLSPDLPKKYRTKFDQHIELARRCKRVSALKTDIELGFNLQDLRFTANEAR.

A Mg(2+)-binding site is contributed by D109. Residues 165–255 (VKPQQLSDYW…FNLQDLRFTA (91 aa)) form the 5'-3' exonuclease domain. K(+)-binding residues include L176, I187, and I190. The tract at residues 189–194 (GIGPKA) is interaction with DNA.

It belongs to the Xni family. Requires Mg(2+) as cofactor. K(+) serves as cofactor.

Functionally, has flap endonuclease activity. During DNA replication, flap endonucleases cleave the 5'-overhanging flap structure that is generated by displacement synthesis when DNA polymerase encounters the 5'-end of a downstream Okazaki fragment. The sequence is that of Flap endonuclease Xni from Vibrio vulnificus (strain CMCP6).